Consider the following 56-residue polypeptide: uncharacterized protein (56 aa).

The chain crosses the membrane as a helical span at residues 12-32; the sequence is GITLFPYFAILILILAILVVG. The interval 19-31 is hydrophobic; that stretch reads FAILILILAILVV.

The protein localises to the membrane. This is an uncharacterized protein from Chenopodium amaranticolor (Quinoa).